The following is a 317-amino-acid chain: Nuclear distribution protein nudE homolog (317 aa).

A coiled-coil region spans residues 29 to 180 (TDVKQEYDEF…LKQELNVKSR (152 aa)). The tract at residues 186–205 (NGTSVPTANDTNTVNSSMNS) is disordered.

The protein belongs to the nudE family.

It localises to the cytoplasm. The protein resides in the cytoskeleton. The protein localises to the microtubule organizing center. It is found in the centrosome. Its subcellular location is the spindle. Functionally, chaperone protein with functions in nuclear localization. Required for centrosome duplication and formation and function of the mitotic spindle. In postmitotic neurons, acts with nudC downstream of dar1 to ensure correct positioning of the nuclei in primary dendrites and as a consequence, is required for determining multipolar neuron morphology. The polypeptide is Nuclear distribution protein nudE homolog (Drosophila melanogaster (Fruit fly)).